We begin with the raw amino-acid sequence, 1390 residues long: DNA-directed RNA polymerase subunit beta (1390 aa).

It belongs to the RNA polymerase beta chain family. The RNAP catalytic core consists of 2 alpha, 1 beta, 1 beta' and 1 omega subunit. When a sigma factor is associated with the core the holoenzyme is formed, which can initiate transcription.

It catalyses the reaction RNA(n) + a ribonucleoside 5'-triphosphate = RNA(n+1) + diphosphate. Its function is as follows. DNA-dependent RNA polymerase catalyzes the transcription of DNA into RNA using the four ribonucleoside triphosphates as substrates. The protein is DNA-directed RNA polymerase subunit beta of Rhodopseudomonas palustris (strain HaA2).